The primary structure comprises 453 residues: Glutamyl-tRNA(Gln) amidotransferase subunit A (453 aa).

Residues lysine 56 and serine 131 each act as charge relay system in the active site. Catalysis depends on serine 155, which acts as the Acyl-ester intermediate.

This sequence belongs to the amidase family. GatA subfamily. Heterotrimer of A, B and C subunits.

It carries out the reaction L-glutamyl-tRNA(Gln) + L-glutamine + ATP + H2O = L-glutaminyl-tRNA(Gln) + L-glutamate + ADP + phosphate + H(+). Functionally, allows the formation of correctly charged Gln-tRNA(Gln) through the transamidation of misacylated Glu-tRNA(Gln) in organisms which lack glutaminyl-tRNA synthetase. The reaction takes place in the presence of glutamine and ATP through an activated gamma-phospho-Glu-tRNA(Gln). The protein is Glutamyl-tRNA(Gln) amidotransferase subunit A of Campylobacter fetus subsp. fetus (strain 82-40).